Consider the following 400-residue polypeptide: Acetylornithine aminotransferase (400 aa).

Residues 102–103 (GA) and Phe-135 contribute to the pyridoxal 5'-phosphate site. A N(2)-acetyl-L-ornithine-binding site is contributed by Arg-138. 220 to 223 (DEVQ) contributes to the pyridoxal 5'-phosphate binding site. Position 249 is an N6-(pyridoxal phosphate)lysine (Lys-249). Residue Ser-276 participates in N(2)-acetyl-L-ornithine binding. Thr-277 lines the pyridoxal 5'-phosphate pocket.

The protein belongs to the class-III pyridoxal-phosphate-dependent aminotransferase family. ArgD subfamily. In terms of assembly, homodimer. It depends on pyridoxal 5'-phosphate as a cofactor.

It is found in the cytoplasm. The catalysed reaction is N(2)-acetyl-L-ornithine + 2-oxoglutarate = N-acetyl-L-glutamate 5-semialdehyde + L-glutamate. Its pathway is amino-acid biosynthesis; L-arginine biosynthesis; N(2)-acetyl-L-ornithine from L-glutamate: step 4/4. This chain is Acetylornithine aminotransferase, found in Gloeobacter violaceus (strain ATCC 29082 / PCC 7421).